A 358-amino-acid chain; its full sequence is DNA integrity scanning protein DisA (358 aa).

In terms of domain architecture, DAC spans 9–147 (KQDLSEILQF…ENMKYILKDI (139 aa)). ATP is bound by residues Gly76, Leu94, and 107–111 (MRHRT).

The protein belongs to the DisA family. As to quaternary structure, homooctamer. It depends on Mg(2+) as a cofactor.

It carries out the reaction 2 ATP = 3',3'-c-di-AMP + 2 diphosphate. Its function is as follows. Participates in a DNA-damage check-point that is active prior to asymmetric division when DNA is damaged. DisA forms globular foci that rapidly scan along the chromosomes during sporulation, searching for lesions. When a lesion is present, DisA pauses at the lesion site. This triggers a cellular response that culminates in a temporary block in sporulation initiation. Functionally, also has diadenylate cyclase activity, catalyzing the condensation of 2 ATP molecules into cyclic di-AMP (c-di-AMP). c-di-AMP acts as a signaling molecule that couples DNA integrity with progression of sporulation. The rise in c-di-AMP level generated by DisA while scanning the chromosome, operates as a positive signal that advances sporulation; upon encountering a lesion, the DisA focus arrests at the damaged site and halts c-di-AMP synthesis. The sequence is that of DNA integrity scanning protein DisA from Bacillus licheniformis (strain ATCC 14580 / DSM 13 / JCM 2505 / CCUG 7422 / NBRC 12200 / NCIMB 9375 / NCTC 10341 / NRRL NRS-1264 / Gibson 46).